Reading from the N-terminus, the 200-residue chain is Dephospho-CoA kinase (200 aa).

Residues 3 to 200 (VLGLTGSIGM…LSGKPAAATR (198 aa)) enclose the DPCK domain. 11-16 (GMGKTT) is an ATP binding site.

This sequence belongs to the CoaE family.

It localises to the cytoplasm. The catalysed reaction is 3'-dephospho-CoA + ATP = ADP + CoA + H(+). It functions in the pathway cofactor biosynthesis; coenzyme A biosynthesis; CoA from (R)-pantothenate: step 5/5. Catalyzes the phosphorylation of the 3'-hydroxyl group of dephosphocoenzyme A to form coenzyme A. The protein is Dephospho-CoA kinase of Brucella abortus (strain 2308).